Reading from the N-terminus, the 278-residue chain is Protoheme IX farnesyltransferase (278 aa).

Transmembrane regions (helical) follow at residues 12-32 (VIWLLILSSVVGYIYAAQTVD), 33-53 (WSKLIALIAVATLAVGGSAAF), 83-103 (ALVYSLALSAAGITLSFYLLG), 105-125 (LPGLFVALGWFFYAVVYTIWL), 130-150 (WLNILGGGFAGNATFLGGYAL), 157-177 (LPAVLISFAIYLWIPSHIWAL), 204-224 (VIISILNIASAVYILWLYLAF), 228-248 (LLGLALVFAGVAGTVATSILA), and 257-277 (MWKMYKASSPILTLFLLALVF).

Belongs to the UbiA prenyltransferase family. Protoheme IX farnesyltransferase subfamily.

The protein localises to the cell membrane. The enzyme catalyses heme b + (2E,6E)-farnesyl diphosphate + H2O = Fe(II)-heme o + diphosphate. It functions in the pathway porphyrin-containing compound metabolism; heme O biosynthesis; heme O from protoheme: step 1/1. Its function is as follows. Converts heme B (protoheme IX) to heme O by substitution of the vinyl group on carbon 2 of heme B porphyrin ring with a hydroxyethyl farnesyl side group. This chain is Protoheme IX farnesyltransferase, found in Pyrobaculum islandicum (strain DSM 4184 / JCM 9189 / GEO3).